The following is a 39-amino-acid chain: Beta-theraphotoxin-Cm2a (39 aa).

Disulfide bonds link Cys7–Cys21, Cys14–Cys26, and Cys20–Cys33. Phe39 carries the phenylalanine amide modification.

As to expression, expressed by the venom gland.

The protein resides in the secreted. In terms of biological role, inhibits mammalian voltage-gated sodium channel subtypes Nav1.5/SCN5A and Nav1.8/SCN10A by shifting the voltage dependence of channel activation to more depolarized potentials and by blocking the inward component of the sodium current. In vivo, this toxin causes erect, elevated tail, initial partial ataxia, followed by recovery over approximately 1 hour after injection and the progressive development of shaking. Although paralysis subsides, the body tremors never cease and persist until the end of the experiment. In Ceratogyrus marshalli (Straighthorned baboon tarantula), this protein is Beta-theraphotoxin-Cm2a.